Reading from the N-terminus, the 133-residue chain is Holo-[acyl-carrier-protein] synthase (133 aa).

Mg(2+) is bound by residues D8 and E56.

This sequence belongs to the P-Pant transferase superfamily. AcpS family. Mg(2+) is required as a cofactor.

The protein localises to the cytoplasm. The catalysed reaction is apo-[ACP] + CoA = holo-[ACP] + adenosine 3',5'-bisphosphate + H(+). Its function is as follows. Transfers the 4'-phosphopantetheine moiety from coenzyme A to a Ser of acyl-carrier-protein. In Clostridium perfringens (strain ATCC 13124 / DSM 756 / JCM 1290 / NCIMB 6125 / NCTC 8237 / Type A), this protein is Holo-[acyl-carrier-protein] synthase.